The primary structure comprises 205 residues: Regulator of G-protein signaling 4 (205 aa).

S-palmitoyl cysteine attachment occurs at residues C2, C12, and C95. Positions 62–178 constitute an RGS domain; sequence SLENLISHEC…LKSRFYLDLV (117 aa).

Palmitoylated on Cys-2 and/or Cys-12. In terms of processing, phosphorylated by cyclic GMP-dependent protein kinase. As to expression, expressed in brain and heart. Expressed in brain at protein level. Expressed in prefontal and visual cortex. Isoform 4 and isoform 5 are expressed ubiquitously. Isoform 1, isoform 2 and isoform 3 are not expressed in the cerebellum.

Its function is as follows. Inhibits signal transduction by increasing the GTPase activity of G protein alpha subunits thereby driving them into their inactive GDP-bound form. Activity on G(z)-alpha is inhibited by phosphorylation of the G-protein. Activity on G(z)-alpha and G(i)-alpha-1 is inhibited by palmitoylation of the G-protein. This chain is Regulator of G-protein signaling 4 (RGS4), found in Homo sapiens (Human).